The following is a 508-amino-acid chain: Aldehyde dehydrogenase (508 aa).

Active-site residues include Glu264 and Cys303.

Belongs to the aldehyde dehydrogenase family.

The catalysed reaction is acetaldehyde + NAD(+) + H2O = acetate + NADH + 2 H(+). It participates in organosulfur degradation. In terms of biological role, catalyzes the NAD(+)-dependent oxidation of acetaldehyde to acetate. This chain is Aldehyde dehydrogenase, found in Paracoccus denitrificans (strain Pd 1222).